The sequence spans 158 residues: NAD(P)H-quinone oxidoreductase subunit J, chloroplastic (158 aa).

The protein belongs to the complex I 30 kDa subunit family. In terms of assembly, NDH is composed of at least 16 different subunits, 5 of which are encoded in the nucleus.

The protein resides in the plastid. Its subcellular location is the chloroplast thylakoid membrane. It carries out the reaction a plastoquinone + NADH + (n+1) H(+)(in) = a plastoquinol + NAD(+) + n H(+)(out). The enzyme catalyses a plastoquinone + NADPH + (n+1) H(+)(in) = a plastoquinol + NADP(+) + n H(+)(out). Its function is as follows. NDH shuttles electrons from NAD(P)H:plastoquinone, via FMN and iron-sulfur (Fe-S) centers, to quinones in the photosynthetic chain and possibly in a chloroplast respiratory chain. The immediate electron acceptor for the enzyme in this species is believed to be plastoquinone. Couples the redox reaction to proton translocation, and thus conserves the redox energy in a proton gradient. The sequence is that of NAD(P)H-quinone oxidoreductase subunit J, chloroplastic from Pelargonium hortorum (Common geranium).